Reading from the N-terminus, the 678-residue chain is Inositol-trisphosphate 3-kinase C (678 aa).

2 disordered regions span residues 26–128 (LEAL…RRNS) and 151–300 (DLQS…LDLS). The span at 44 to 58 (PGAGGPTGRPEGGGP) shows a compositional bias: gly residues. Composition is skewed to basic and acidic residues over residues 61–76 (WIEE…RTDL) and 107–116 (EKPRQNKELD). Residue Ser-160 is modified to Phosphoserine. Basic and acidic residues-rich tracts occupy residues 173-196 (ELDR…DNLR) and 220-236 (SGKE…HDTD). Residues 318-326 (LCPVPRLII) carry the Nuclear export signal motif. Residues 328-380 (PETPEPEAQPVGPQSRIEGGTGGFSSASSFDESEDDLVAGGGGTSDPEDRAGS) are disordered. Residue Thr-330 is modified to Phosphothreonine. At Ser-398 the chain carries Phosphoserine. ATP-binding positions include Lys-426, 466 to 468 (EDL), and Asp-479. Substrate is bound by residues Lys-481, 502 to 508 (RKDMYEK), and 529 to 536 (KPRYMQWR). Residues 504–512 (DMYEKMVAV) form a calmodulin-binding region. 2 residues coordinate ATP: Lys-553 and Asp-633. Lys-636 serves as a coordination point for substrate.

It belongs to the inositol phosphokinase (IPK) family.

It localises to the nucleus. It is found in the cytoplasm. It carries out the reaction 1D-myo-inositol 1,4,5-trisphosphate + ATP = 1D-myo-inositol 1,3,4,5-tetrakisphosphate + ADP + H(+). Its activity is regulated as follows. Activated by calcium/calmodulin. Inhibited by high concentrations of the substrate Ins(1,2,4)P3, and allosterically activated by the product Ins(1,3,4,5)P4. Functionally, catalyzes the phosphorylation of 1D-myo-inositol 1,4,5-trisphosphate (InsP3) into 1D-myo-inositol 1,3,4,5-tetrakisphosphate and participates to the regulation of calcium homeostasis. Can phosphorylate inositol 2,4,5-triphosphate to inositol 2,4,5,6-tetraphosphate. The chain is Inositol-trisphosphate 3-kinase C (Itpkc) from Mus musculus (Mouse).